We begin with the raw amino-acid sequence, 354 residues long: Photosystem II protein D1 (354 aa).

At Thr2 the chain carries N-acetylthreonine. Thr2 is modified (phosphothreonine). The next 3 membrane-spanning stretches (helical) occupy residues 29–46 (YIGWFGVLMIPTLLTATS), 118–133 (HFLLGVACYMGREWEL), and 142–156 (WIAVAYSAPVAAATA). Residue His118 coordinates chlorophyll a. Tyr126 is a pheophytin a binding site. The [CaMn4O5] cluster site is built by Asp170 and Glu189. Residues 197–218 (FHMLGVAGVFGGSLFSAMHGSL) form a helical membrane-spanning segment. His198 contributes to the chlorophyll a binding site. A quinone-binding positions include His215 and 264–265 (SF). Fe cation is bound at residue His215. His272 provides a ligand contact to Fe cation. The helical transmembrane segment at 274-288 (FLAAWPVVGIWFTAL) threads the bilayer. Residues His332, Glu333, Asp342, and Ala344 each coordinate [CaMn4O5] cluster. A propeptide spanning residues 345 to 354 (ASIEAPSLNG) is cleaved from the precursor.

It belongs to the reaction center PufL/M/PsbA/D family. As to quaternary structure, PSII is composed of 1 copy each of membrane proteins PsbA, PsbB, PsbC, PsbD, PsbE, PsbF, PsbH, PsbI, PsbJ, PsbK, PsbL, PsbM, PsbT, PsbX, PsbY, PsbZ, Psb30/Ycf12, at least 3 peripheral proteins of the oxygen-evolving complex and a large number of cofactors. It forms dimeric complexes. Requires The D1/D2 heterodimer binds P680, chlorophylls that are the primary electron donor of PSII, and subsequent electron acceptors. It shares a non-heme iron and each subunit binds pheophytin, quinone, additional chlorophylls, carotenoids and lipids. D1 provides most of the ligands for the Mn4-Ca-O5 cluster of the oxygen-evolving complex (OEC). There is also a Cl(-1) ion associated with D1 and D2, which is required for oxygen evolution. The PSII complex binds additional chlorophylls, carotenoids and specific lipids. as cofactor. Post-translationally, tyr-161 forms a radical intermediate that is referred to as redox-active TyrZ, YZ or Y-Z. In terms of processing, C-terminally processed by CTPA; processing is essential to allow assembly of the oxygen-evolving complex and thus photosynthetic growth.

It is found in the plastid. The protein localises to the chloroplast thylakoid membrane. It catalyses the reaction 2 a plastoquinone + 4 hnu + 2 H2O = 2 a plastoquinol + O2. Its function is as follows. Photosystem II (PSII) is a light-driven water:plastoquinone oxidoreductase that uses light energy to abstract electrons from H(2)O, generating O(2) and a proton gradient subsequently used for ATP formation. It consists of a core antenna complex that captures photons, and an electron transfer chain that converts photonic excitation into a charge separation. The D1/D2 (PsbA/PsbD) reaction center heterodimer binds P680, the primary electron donor of PSII as well as several subsequent electron acceptors. The sequence is that of Photosystem II protein D1 from Selaginella uncinata (Blue spike-moss).